The primary structure comprises 222 residues: S-crystallin SL20-1 (222 aa).

Residues 2 to 80 (PNYTLYYFNG…YLARENGYYG (79 aa)) form the GST N-terminal domain. One can recognise a GST C-terminal domain in the interval 82 to 222 (NNMDMFRIDY…YLKKRNNTNW (141 aa)).

Belongs to the GST superfamily. As to expression, lens.

Functionally, S-crystallins are structural components of squids and octopi eye lens. Contains relatively little if any GST activity. The sequence is that of S-crystallin SL20-1 from Nototodarus sloanii (Wellington flying squid).